A 654-amino-acid polypeptide reads, in one-letter code: Chaperone protein HtpG (654 aa).

Residues 1–344 form an a; substrate-binding region; sequence MTVENAPQRE…SDDLPLNVSR (344 aa). The segment at 345-556 is b; it reads ELLQDSQVVR…EGGSPAYLER (212 aa). The c stretch occupies residues 557 to 654; the sequence is LLQQRGRGAG…AQTPASATAS (98 aa).

The protein belongs to the heat shock protein 90 family. Homodimer.

Its subcellular location is the cytoplasm. Its function is as follows. Molecular chaperone. Has ATPase activity. The sequence is that of Chaperone protein HtpG from Myxococcus xanthus (strain DK1622).